The chain runs to 1014 residues: Regulator of telomere elongation helicase 1 homolog (1014 aa).

One can recognise a Helicase ATP-binding domain in the interval 7-308; that stretch reads RGVDVDFPYD…NSADKQFDPE (302 aa). 42 to 49 is an ATP binding site; sequence SPTGTGKT. The segment covering 70-85 has biased composition (gly residues); it reads GGGGGGGGGGGGGGGS. Residues 70 to 106 are disordered; the sequence is GGGGGGGGGGGGGGGSQQPPYGSQPSGSQHSGGSASQ. Residues 86–106 are compositionally biased toward low complexity; that stretch reads QQPPYGSQPSGSQHSGGSASQ. The [4Fe-4S] cluster site is built by Cys149, Cys170, Cys175, and Cys211. The short motif at 255-258 is the DEAH box element; sequence DEAH. Positions 906–930 are disordered; the sequence is SSKKSNITHAPGNSGAIHEKSGGQE.

The protein belongs to the helicase family. RAD3/XPD subfamily.

It localises to the nucleus. It catalyses the reaction ATP + H2O = ADP + phosphate + H(+). In terms of biological role, a probable ATP-dependent DNA helicase implicated in DNA replication, DNA repair and the maintenance of genomic stability. Acts as an anti-recombinase to counteract toxic recombination and limit crossover during meiosis. Regulates meiotic recombination and crossover homeostasis by physically dissociating strand invasion events and thereby promotes noncrossover repair by meiotic synthesis dependent strand annealing (SDSA) as well as disassembly of D loop recombination intermediates. The polypeptide is Regulator of telomere elongation helicase 1 homolog (Oryza sativa subsp. japonica (Rice)).